Consider the following 1013-residue polypeptide: GPI ethanolamine phosphate transferase 3 (1013 aa).

The chain crosses the membrane as a helical span at residues 41–61; sequence TLYIFLYSALAALQFIAIAFF. Residues Asn184, Asn205, Asn336, Asn399, and Asn423 are each glycosylated (N-linked (GlcNAc...) asparagine). Transmembrane regions (helical) follow at residues 447–467, 484–504, and 515–535; these read YYSI…LITI, VPTI…VFYV, and LWAS…VPIF. N-linked (GlcNAc...) asparagine glycosylation is present at Asn539. Helical transmembrane passes span 558-578, 582-602, 643-663, and 682-702; these read VAAF…FTIW, IVSF…VFLP, IVGG…SLIT, and NYSF…PACI. Residue Asn707 is glycosylated (N-linked (GlcNAc...) asparagine). The helical transmembrane segment at 715–735 threads the bilayer; sequence AAPIWIGMLMKSILFVNFIYW. N-linked (GlcNAc...) asparagine glycosylation is found at Asn742, Asn750, and Asn755. Helical transmembrane passes span 761-781, 802-822, 825-845, 868-888, 899-919, 943-963, and 977-997; these read IVVG…PLCI, NAYG…ILLF, PLAQ…LEIF, FFST…GFIL, LGIV…VALL, GMLL…VTNF, and FMFA…ITIA.

It belongs to the PIGG/PIGN/PIGO family. PIGO subfamily.

Its subcellular location is the endoplasmic reticulum membrane. The protein operates within glycolipid biosynthesis; glycosylphosphatidylinositol-anchor biosynthesis. Involved in glycosylphosphatidylinositol-anchor biosynthesis. Transfers ethanolamine phosphate to the GPI third mannose which links the GPI-anchor to the C-terminus of the proteins by an amide bond. Involved in cell wall biosynthesis. This is GPI ethanolamine phosphate transferase 3 (GPI13) from Eremothecium gossypii (strain ATCC 10895 / CBS 109.51 / FGSC 9923 / NRRL Y-1056) (Yeast).